The sequence spans 968 residues: C-1-tetrahydrofolate synthase, cytoplasmic (968 aa).

The tract at residues 1–338 is methylenetetrahydrofolate dehydrogenase and cyclohydrolase; it reads MSAQYQRFLK…ERLAKSQWAL (338 aa). Residues 86-90 and 133-135 contribute to the substrate site; these read YIRMK and VQM. Residues 205–207 and serine 230 contribute to the NADP(+) site; that span reads GRS. 305-309 contacts substrate; the sequence is PGGVG. A formyltetrahydrofolate synthetase region spans residues 339–968; it reads QTLPLKPQRP…TETGEIEGLF (630 aa). 413 to 420 lines the ATP pocket; it reads TPLGEGKT.

In the N-terminal section; belongs to the tetrahydrofolate dehydrogenase/cyclohydrolase family. It in the C-terminal section; belongs to the formate--tetrahydrofolate ligase family. As to quaternary structure, homodimer. In terms of tissue distribution, present in all tissues.

Its subcellular location is the cytoplasm. The enzyme catalyses (6R)-5,10-methylene-5,6,7,8-tetrahydrofolate + NADP(+) = (6R)-5,10-methenyltetrahydrofolate + NADPH. The catalysed reaction is (6R)-5,10-methenyltetrahydrofolate + H2O = (6R)-10-formyltetrahydrofolate + H(+). It catalyses the reaction (6S)-5,6,7,8-tetrahydrofolate + formate + ATP = (6R)-10-formyltetrahydrofolate + ADP + phosphate. It participates in one-carbon metabolism; tetrahydrofolate interconversion. This Drosophila melanogaster (Fruit fly) protein is C-1-tetrahydrofolate synthase, cytoplasmic (pug).